Reading from the N-terminus, the 234-residue chain is Small ribosomal subunit protein eS4 (234 aa).

The 63-residue stretch at V37–G99 folds into the S4 RNA-binding domain.

It belongs to the eukaryotic ribosomal protein eS4 family.

This chain is Small ribosomal subunit protein eS4 (rps4e), found in Haloarcula marismortui (strain ATCC 43049 / DSM 3752 / JCM 8966 / VKM B-1809) (Halobacterium marismortui).